We begin with the raw amino-acid sequence, 131 residues long: Small ribosomal subunit protein uS9c (131 aa).

It belongs to the universal ribosomal protein uS9 family.

Its subcellular location is the plastid. It is found in the chloroplast. This is Small ribosomal subunit protein uS9c (rps9) from Emiliania huxleyi (Coccolithophore).